A 536-amino-acid chain; its full sequence is Transcriptional regulator RPN4 (536 aa).

2 stretches are compositionally biased toward low complexity: residues 154–181 (QEQQ…QQQQ) and 361–370 (SPSAISPASP). Disordered stretches follow at residues 154–196 (QEQQ…TRRR), 353–375 (VFDQ…SDDM), and 393–434 (EEIN…AEIT). A compositionally biased stretch (basic and acidic residues) spans 393-411 (EEINKKHSKSGKKESKSQK). The C2H2-type zinc-finger motif lies at 440 to 471 (HQCNLINPSTGEPCNKQFSRPYDLIRHQDTIH).

The protein resides in the nucleus. Its function is as follows. Transcriptional activator of a number of genes encoding proteasomal subunits. Binds to the DNA sequence 5'-GAAGGCAAAA-3', enriched in regions upstream of proteasome genes. In Candida albicans (strain SC5314 / ATCC MYA-2876) (Yeast), this protein is Transcriptional regulator RPN4 (RPN4).